A 502-amino-acid chain; its full sequence is Ribose import ATP-binding protein RbsA (502 aa).

ABC transporter domains follow at residues 3–239 (VTMR…VGRE) and 249–493 (AAPG…TGGA). 35 to 42 (GENGAGKS) is an ATP binding site.

It belongs to the ABC transporter superfamily. Ribose importer (TC 3.A.1.2.1) family. As to quaternary structure, the complex is composed of an ATP-binding protein (RbsA), two transmembrane proteins (RbsC) and a solute-binding protein (RbsB).

It localises to the cell inner membrane. It catalyses the reaction D-ribose(out) + ATP + H2O = D-ribose(in) + ADP + phosphate + H(+). Functionally, part of the ABC transporter complex RbsABC involved in ribose import. Responsible for energy coupling to the transport system. In Chromobacterium violaceum (strain ATCC 12472 / DSM 30191 / JCM 1249 / CCUG 213 / NBRC 12614 / NCIMB 9131 / NCTC 9757 / MK), this protein is Ribose import ATP-binding protein RbsA.